The sequence spans 222 residues: Charged multivesicular body protein 3 (222 aa).

G2 carries the N-myristoyl glycine lipid modification. The intramolecular interaction with C-terminus stretch occupies residues 2 to 113 (GLFGKTQEKP…LQKSTEVMKA (112 aa)). Residues 22-54 (KIRKEMRVVDRQIRDIQREEEKVKRSVKDAAKK) are a coiled coil. Important for autoinhibitory function stretches follow at residues 59–64 (VCVVLA) and 168–169 (IL). A coiled-coil region spans residues 149-222 (ESMDDQEEME…MQSRLATLRS (74 aa)). The intramolecular interaction with N-terminus stretch occupies residues 151-220 (MDDQEEMEEA…EAMQSRLATL (70 aa)). Positions 151 to 222 (MDDQEEMEEA…MQSRLATLRS (72 aa)) are interaction with VPS4A. Residue K179 forms a Glycyl lysine isopeptide (Lys-Gly) (interchain with G-Cter in ubiquitin) linkage. Residues 180 to 222 (APSKVTDALPEPEPSGAMAASDEEEEEEEALEAMQSRLATLRS) form a disordered region. Interaction with STAMBP stretches follow at residues 196–222 (AMAA…TLRS), 203–207 (EEEEE), and 221–222 (RS). Residue S200 is modified to Phosphoserine. Residues 200–210 (SDEEEEEEEAL) show a composition bias toward acidic residues. Positions 201–211 (DEEEEEEEALE) match the MIT-interacting motif motif.

This sequence belongs to the SNF7 family. In terms of assembly, probable core component of the endosomal sorting required for transport complex III (ESCRT-III). ESCRT-III components are thought to multimerize to form a flat lattice on the perimeter membrane of the endosome. Several assembly forms of ESCRT-III may exist that interact and act sequentially. Forms a metastable monomer in solution; its core structure (without part of the putative autoinhibitory C-terminal acidic region) oligomerizes into a flat lattice via two different dimerization interfaces. In vitro, heteromerizes with CHMP2A (but not CHMP4) to form helical tubular structures that expose membrane-interacting sites on the outside whereas VPS4B can associate on the inside of the tubule. May interact with IGFBP7; the relevance of such interaction however remains unclear. Interacts with CHMP2A. Interacts with CHMP4A; the interaction requires the release of CHMP4A autoinhibition. Interacts with VPS4A. Interacts with STAMBP; the interaction appears to relieve the autoinhibition of CHMP3. Interacts with VTA1.

The protein resides in the cytoplasm. The protein localises to the cytosol. It is found in the membrane. Its subcellular location is the endosome. It localises to the late endosome membrane. In terms of biological role, probable core component of the endosomal sorting required for transport complex III (ESCRT-III) which is involved in multivesicular bodies (MVBs) formation and sorting of endosomal cargo proteins into MVBs. MVBs contain intraluminal vesicles (ILVs) that are generated by invagination and scission from the limiting membrane of the endosome and mostly are delivered to lysosomes enabling degradation of membrane proteins, such as stimulated growth factor receptors, lysosomal enzymes and lipids. The MVB pathway appears to require the sequential function of ESCRT-O, -I,-II and -III complexes. ESCRT-III proteins mostly dissociate from the invaginating membrane before the ILV is released. The ESCRT machinery also functions in topologically equivalent membrane fission events, such as the terminal stages of cytokinesis and the budding of enveloped viruses (lentiviruses). ESCRT-III proteins are believed to mediate the necessary vesicle extrusion and/or membrane fission activities, possibly in conjunction with the AAA ATPase VPS4. Selectively binds to phosphatidylinositol 3,5-bisphosphate PtdIns(3,5)P2 and PtdIns(3,4)P2 in preference to other phosphoinositides tested. Involved in late stages of cytokinesis. Plays a role in endosomal sorting/trafficking of EGF receptor. The sequence is that of Charged multivesicular body protein 3 (CHMP3) from Macaca fascicularis (Crab-eating macaque).